A 155-amino-acid chain; its full sequence is Ribonuclease H (155 aa).

The RNase H type-1 domain occupies 1 to 142 (MTKQVEIFTD…CDELARAAAM (142 aa)). D10, E48, D70, and D134 together coordinate Mg(2+).

The protein belongs to the RNase H family. As to quaternary structure, monomer. The cofactor is Mg(2+).

The protein localises to the cytoplasm. It carries out the reaction Endonucleolytic cleavage to 5'-phosphomonoester.. Functionally, endonuclease that specifically degrades the RNA of RNA-DNA hybrids. This chain is Ribonuclease H, found in Enterobacter sp. (strain 638).